A 247-amino-acid polypeptide reads, in one-letter code: Triosephosphate isomerase (247 aa).

Substrate is bound at residue asparagine 8 to lysine 10. The active-site Electrophile is the histidine 94. The active-site Proton acceptor is the glutamate 165. Substrate is bound by residues glycine 171 and serine 210.

Belongs to the triosephosphate isomerase family. Homodimer.

The protein localises to the cytoplasm. The enzyme catalyses D-glyceraldehyde 3-phosphate = dihydroxyacetone phosphate. The protein operates within carbohydrate biosynthesis; gluconeogenesis. It participates in carbohydrate degradation; glycolysis; D-glyceraldehyde 3-phosphate from glycerone phosphate: step 1/1. Functionally, involved in the gluconeogenesis. Catalyzes stereospecifically the conversion of dihydroxyacetone phosphate (DHAP) to D-glyceraldehyde-3-phosphate (G3P). In Aquifex aeolicus (strain VF5), this protein is Triosephosphate isomerase.